We begin with the raw amino-acid sequence, 238 residues long: Ribonuclease PH (238 aa).

Residues arginine 86 and 124 to 126 (GTR) each bind phosphate.

The protein belongs to the RNase PH family. Homohexameric ring arranged as a trimer of dimers.

It catalyses the reaction tRNA(n+1) + phosphate = tRNA(n) + a ribonucleoside 5'-diphosphate. Phosphorolytic 3'-5' exoribonuclease that plays an important role in tRNA 3'-end maturation. Removes nucleotide residues following the 3'-CCA terminus of tRNAs; can also add nucleotides to the ends of RNA molecules by using nucleoside diphosphates as substrates, but this may not be physiologically important. Probably plays a role in initiation of 16S rRNA degradation (leading to ribosome degradation) during starvation. The chain is Ribonuclease PH from Chelativorans sp. (strain BNC1).